We begin with the raw amino-acid sequence, 445 residues long: tRNA-2-methylthio-N(6)-dimethylallyladenosine synthase (445 aa).

An MTTase N-terminal domain is found at 2–122 (KKAFVKSYGC…LPDLLARSRE (121 aa)). The [4Fe-4S] cluster site is built by cysteine 11, cysteine 47, cysteine 85, cysteine 157, cysteine 161, and cysteine 164. The Radical SAM core domain maps to 143-378 (RTLGASAFLT…LDSQRHAYQR (236 aa)). One can recognise a TRAM domain in the interval 378–440 (RAAAGRVFDV…SNSLFGELVS (63 aa)).

Belongs to the methylthiotransferase family. MiaB subfamily. In terms of assembly, monomer. Requires [4Fe-4S] cluster as cofactor.

The protein localises to the cytoplasm. The catalysed reaction is N(6)-dimethylallyladenosine(37) in tRNA + (sulfur carrier)-SH + AH2 + 2 S-adenosyl-L-methionine = 2-methylsulfanyl-N(6)-dimethylallyladenosine(37) in tRNA + (sulfur carrier)-H + 5'-deoxyadenosine + L-methionine + A + S-adenosyl-L-homocysteine + 2 H(+). Functionally, catalyzes the methylthiolation of N6-(dimethylallyl)adenosine (i(6)A), leading to the formation of 2-methylthio-N6-(dimethylallyl)adenosine (ms(2)i(6)A) at position 37 in tRNAs that read codons beginning with uridine. This is tRNA-2-methylthio-N(6)-dimethylallyladenosine synthase from Methylobacterium radiotolerans (strain ATCC 27329 / DSM 1819 / JCM 2831 / NBRC 15690 / NCIMB 10815 / 0-1).